We begin with the raw amino-acid sequence, 241 residues long: Deoxynucleotide monophosphate kinase (241 aa).

K10 is a binding site for dGMP. R11, G13, D15, and T16 together coordinate ATP. Residues I36 and K37 each contribute to the dGMP site. Y42 provides a ligand contact to Mg(2+). Residue R68 participates in dGMP binding. Mg(2+)-binding residues include Q85 and E108. DGMP is bound by residues R132, G139, T140, V144, W152, D175, R177, Q178, E181, and T208.

It belongs to the dNMP kinase family. Homodimer. Mg(2+) serves as cofactor.

It carries out the reaction dTMP + ATP = dTDP + ADP. The enzyme catalyses dGMP + ATP = dGDP + ADP. The catalysed reaction is 5-hydroxymethyl-dCMP + ATP = 5-hydroxymethyl-dCDP + ADP. With respect to regulation, inhibited by pyridoxal 5'-phosphate and diethylpyrocarbonate. Allows the synthesis of deoxyribonucleoside triphosphates necessary for the rapid viral DNA replication. Phosphorylates dGMP, dTMP and 5-hydroxymethyl-dCMP (hmdCMP) while excluding dCMP and dAMP. The phosphorylation of 5-hydroxymethyl-dCMP represents the first step in the replacement of cytosine by hydroxymethylcytosine in new viral DNA genomes. This is Deoxynucleotide monophosphate kinase (1) from Enterobacteria phage T4 (Bacteriophage T4).